The chain runs to 437 residues: GTPase Obg (437 aa).

One can recognise an Obg domain in the interval 2–160 (SLFLDTARIE…KILLLELRVL (159 aa)). An OBG-type G domain is found at 161 to 338 (ADVGLVGFPS…LLARTSELLA (178 aa)). GTP contacts are provided by residues 167-174 (GFPSVGKS), 192-196 (FTTIT), 214-217 (DMPG), 284-287 (NKMD), and 319-321 (SGL). Mg(2+)-binding residues include Ser174 and Thr194. The region spanning 359 to 437 (GFEEEEKPFK…IQKFEFEFVD (79 aa)) is the OCT domain.

It belongs to the TRAFAC class OBG-HflX-like GTPase superfamily. OBG GTPase family. In terms of assembly, monomer. Mg(2+) is required as a cofactor.

The protein resides in the cytoplasm. In terms of biological role, an essential GTPase which binds GTP, GDP and possibly (p)ppGpp with moderate affinity, with high nucleotide exchange rates and a fairly low GTP hydrolysis rate. Plays a role in control of the cell cycle, stress response, ribosome biogenesis and in those bacteria that undergo differentiation, in morphogenesis control. The polypeptide is GTPase Obg (Lactococcus lactis subsp. lactis (strain IL1403) (Streptococcus lactis)).